The sequence spans 489 residues: 3-octaprenyl-4-hydroxybenzoate carboxy-lyase (489 aa).

Asn172 serves as a coordination point for Mn(2+). Prenylated FMN contacts are provided by residues 175 to 177, 189 to 191, and 194 to 195; these read IYR, RWL, and RG. Residue Glu238 coordinates Mn(2+). Asp287 acts as the Proton donor in catalysis.

The protein belongs to the UbiD family. In terms of assembly, homohexamer. Requires prenylated FMN as cofactor. Mn(2+) is required as a cofactor.

The protein localises to the cell membrane. The enzyme catalyses a 4-hydroxy-3-(all-trans-polyprenyl)benzoate + H(+) = a 2-(all-trans-polyprenyl)phenol + CO2. It functions in the pathway cofactor biosynthesis; ubiquinone biosynthesis. Functionally, catalyzes the decarboxylation of 3-octaprenyl-4-hydroxy benzoate to 2-octaprenylphenol, an intermediate step in ubiquinone biosynthesis. The sequence is that of 3-octaprenyl-4-hydroxybenzoate carboxy-lyase from Klebsiella pneumoniae (strain 342).